The following is a 533-amino-acid chain: Peptide chain release factor 3 (533 aa).

The tr-type G domain occupies 11–284 (RRRRTFAIIS…ALVGLSPEPL (274 aa)). Residues 20 to 27 (SHPDAGKT), 92 to 96 (DTPGH), and 146 to 149 (NKLD) each bind GTP.

Belongs to the TRAFAC class translation factor GTPase superfamily. Classic translation factor GTPase family. PrfC subfamily.

It is found in the cytoplasm. Its function is as follows. Increases the formation of ribosomal termination complexes and stimulates activities of RF-1 and RF-2. It binds guanine nucleotides and has strong preference for UGA stop codons. It may interact directly with the ribosome. The stimulation of RF-1 and RF-2 is significantly reduced by GTP and GDP, but not by GMP. This is Peptide chain release factor 3 from Ralstonia nicotianae (strain ATCC BAA-1114 / GMI1000) (Ralstonia solanacearum).